Reading from the N-terminus, the 580-residue chain is uncharacterized protein (580 aa).

Over residues 1-44 (MSESSVNADTPKNTNDVLNGAYQSATTEPEGQYRSATDNPSLYQ) the composition is skewed to polar residues. A disordered region spans residues 1–45 (MSESSVNADTPKNTNDVLNGAYQSATTEPEGQYRSATDNPSLYQV). Serine 99 bears the Phosphoserine mark. 12 helical membrane passes run 143–163 (IYAYASLTIAWGSSVLSPASA), 177–197 (LLNVSLFMLGYCLGPICWAPM), 207–227 (LYIGLFLFSVFQIAVATAQDI), 235–255 (FFGGYGACVPLCVVAAAFADM), 265–285 (ITIFAAVIFVGPLVAPIVGGF), 295–315 (WTEYITSFMGFLSIILIYLFC), 370–390 (PIVFLVSLYCSFVYAIIYLLL), 405–425 (LGVSALPYIGILVGVFIGCGI), 450–470 (LPPMMIGSFLFPAGIFWLAWS), 476–496 (VHWIVPTLSGLLTGAGILLIF), 511–533 (AASVFAANVIMRSAVAGGFPLFA), and 546–566 (GSLLGFIATALIPMPFAFFFF).

Belongs to the major facilitator superfamily. CAR1 family.

The protein localises to the membrane. This is an uncharacterized protein from Schizosaccharomyces pombe (strain 972 / ATCC 24843) (Fission yeast).